The chain runs to 277 residues: Inositol monophosphatase 1 (277 aa).

Positions 70, 90, 92, and 93 each coordinate Mg(2+). Glu-70 provides a ligand contact to substrate. 92-95 (IDGT) is a binding site for substrate. Residue Thr-168 is modified to Phosphothreonine. Substrate is bound by residues 194–196 (GTA), Glu-213, and Asp-220. Asp-220 serves as a coordination point for Mg(2+).

The protein belongs to the inositol monophosphatase superfamily. As to quaternary structure, homodimer. Mg(2+) serves as cofactor.

It localises to the cytoplasm. The catalysed reaction is a myo-inositol phosphate + H2O = myo-inositol + phosphate. The enzyme catalyses 1D-myo-inositol 1-phosphate + H2O = myo-inositol + phosphate. It carries out the reaction 1D-myo-inositol 2-phosphate + H2O = myo-inositol + phosphate. It catalyses the reaction 1D-myo-inositol 3-phosphate + H2O = myo-inositol + phosphate. The catalysed reaction is 1D-myo-inositol 4-phosphate + H2O = myo-inositol + phosphate. The enzyme catalyses 1D-myo-inositol 5-phosphate + H2O = myo-inositol + phosphate. It carries out the reaction 1D-myo-inositol 6-phosphate + H2O = myo-inositol + phosphate. It catalyses the reaction scyllo-inositol 1-phosphate + H2O = scyllo-inositol + phosphate. The catalysed reaction is alpha-D-galactose 1-phosphate + H2O = D-galactose + phosphate. The enzyme catalyses alpha-D-glucose 1-phosphate + H2O = D-glucose + phosphate. It carries out the reaction D-glucose 6-phosphate + H2O = D-glucose + phosphate. It catalyses the reaction beta-D-fructose 1-phosphate + H2O = D-fructose + phosphate. The catalysed reaction is glycerol 2-phosphate + H2O = glycerol + phosphate. The enzyme catalyses adenosine 2'-phosphate + H2O = adenosine + phosphate. The protein operates within polyol metabolism; myo-inositol biosynthesis; myo-inositol from D-glucose 6-phosphate: step 2/2. With respect to regulation, inhibited by Li(+), Ca(2+) and Mn(2+), but also by Mg(2+) at concentrations above 3 mM. Phosphatase involved in the dephosphorylation of myo-inositol monophosphate to generate myo-inositol. Is also able to dephosphorylate scyllo-inositol-phosphate, myo-inositol 1,4-diphosphate, scyllo-inositol-1,3-diphosphate and scyllo-inositol-1,4-diphosphate. Also dephosphorylates in vitro other sugar-phosphates including D-galactose-1-phosphate, glucose-1-phosphate, glucose-6-phosphate, fructose-1-phosphate, beta-glycerophosphate and 2'-AMP. Responsible for the provision of inositol required for synthesis of phosphatidylinositol and polyphosphoinositides, and involved in maintaining normal brain function. Has been implicated as the pharmacological target for lithium Li(+) action in brain. The chain is Inositol monophosphatase 1 (IMPA1) from Sus scrofa (Pig).